We begin with the raw amino-acid sequence, 476 residues long: Argininosuccinate lyase (476 aa).

Belongs to the lyase 1 family. Argininosuccinate lyase subfamily.

It localises to the cytoplasm. The catalysed reaction is 2-(N(omega)-L-arginino)succinate = fumarate + L-arginine. It functions in the pathway amino-acid biosynthesis; L-arginine biosynthesis; L-arginine from L-ornithine and carbamoyl phosphate: step 3/3. The chain is Argininosuccinate lyase from Nitrosospira multiformis (strain ATCC 25196 / NCIMB 11849 / C 71).